Consider the following 73-residue polypeptide: N-terminal-borealin-like protein (73 aa).

This sequence belongs to the borealin family. As to quaternary structure, component of the aurora kinase complex composed of at least BIR1, BNL1, IPL1 and SLI15.

Its subcellular location is the nucleus. It is found in the cytoplasm. The protein resides in the cytoskeleton. The protein localises to the spindle. Component of the aurora kinase complex, also called chromosomal passenger complex (CPC), essential for chromosome segregation and metaphase chromosome alignment. Mediates the SLI15-BIR1 interaction within the CPC. This chain is N-terminal-borealin-like protein (NBL1), found in Saccharomyces cerevisiae (strain ATCC 204508 / S288c) (Baker's yeast).